The primary structure comprises 394 residues: Stearoyl-[acyl-carrier-protein] 9-desaturase 1, chloroplastic (394 aa).

Residues 1 to 37 constitute a chloroplast transit peptide; it reads MVMAMDRIALFSSSSSVYHHGSSHSHGSKSSRVFTIR. 6 residues coordinate Fe cation: glutamate 135, glutamate 173, histidine 176, glutamate 226, glutamate 259, and histidine 262.

It belongs to the fatty acid desaturase type 2 family. As to quaternary structure, homodimer. It depends on Fe(2+) as a cofactor. As to expression, ubiquitously expressed.

It localises to the plastid. The protein localises to the chloroplast. The catalysed reaction is octadecanoyl-[ACP] + 2 reduced [2Fe-2S]-[ferredoxin] + O2 + 2 H(+) = (9Z)-octadecenoyl-[ACP] + 2 oxidized [2Fe-2S]-[ferredoxin] + 2 H2O. Its pathway is lipid metabolism; fatty acid metabolism. Functionally, converts stearoyl-ACP to oleoyl-ACP by introduction of a cis double bond between carbons 9 and 10 of the acyl chain. The chain is Stearoyl-[acyl-carrier-protein] 9-desaturase 1, chloroplastic (S-ACP-DES1) from Arabidopsis thaliana (Mouse-ear cress).